A 697-amino-acid chain; its full sequence is Transmembrane protein 168 (697 aa).

The next 3 membrane-spanning stretches (helical) occupy residues 36-56 (LGYL…YVRW), 63-83 (LILV…ILYY), and 89-109 (AASL…LCFL). Asn111 carries an N-linked (GlcNAc...) asparagine glycan. The next 7 membrane-spanning stretches (helical) occupy residues 172–192 (MLVE…MLII), 199–219 (FLAI…SLET), 223–243 (PIAF…DIYF), 265–285 (LSVV…AFKL), 293–313 (FVIP…IIFL), 352–372 (FCLI…ILGA), and 380–400 (GIFL…HGLF). Asn533 and Asn598 each carry an N-linked (GlcNAc...) asparagine glycan. Residues 646–666 (ITYPLVHLANWLCGLNLFWIC) form a helical membrane-spanning segment.

The protein belongs to the TMEM168 family.

The protein resides in the nucleus membrane. Plays a key role in maintaining the cardiac electrical stability by modulating cell surface expression of SCN5A. May play a role in the modulation of anxiety behavior by regulating GABAergic neuronal system in the nucleus accumbens. This Homo sapiens (Human) protein is Transmembrane protein 168.